Reading from the N-terminus, the 137-residue chain is Actin-depolymerizing factor 2 (137 aa).

One can recognise an ADF-H domain in the interval 5–137; the sequence is ASGMAVHDDC…GLDVFKSRTN (133 aa). A Phosphoserine modification is found at serine 6.

It belongs to the actin-binding proteins ADF family. Interacts with AIP1-1.

It localises to the cytoplasm. Its subcellular location is the cytoskeleton. In terms of biological role, actin-depolymerizing protein. Severs actin filaments (F-actin) and binds to actin monomers. Required for normal cell growth, plant development, cell organ expansion and flowering. Essential for root-knot nematode infection. This is Actin-depolymerizing factor 2 (ADF2) from Arabidopsis thaliana (Mouse-ear cress).